The following is a 356-amino-acid chain: MIFNKLEEVEDRFREVEGLLSDPQVVSQQKRFLELTREHAELSSVVAVYREYKRVSEDIEGNRELLQDSDPEMREMAKAELPELEAHREELAQQLKVLLLPKDPNDDKNVILEIRAGTGGDEAALFAGDLFRMYSRFAEGQGWKVETMSVSDSEAGGFKEIIAMISGNRVYSQLKYESGTHRVQRVPETEAQGRIHTSACTVAVLPEAEDVDVDIDPTDLRIDVYRASGAGGQHVNKTESAVRITHVPTGVVVSCQDEKSQHKNKAKAMKVLKSRILDQVMADQQAQMAADRKSQVGSGDRSQRIRTYNFPQGRCTDHRIGLTLYRLEGIMQGNLSELVEPLTLHYQSEAMAAQEA.

Residue Gln-233 is modified to N5-methylglutamine.

It belongs to the prokaryotic/mitochondrial release factor family. Methylated by PrmC. Methylation increases the termination efficiency of RF1.

It is found in the cytoplasm. Its function is as follows. Peptide chain release factor 1 directs the termination of translation in response to the peptide chain termination codons UAG and UAA. In Syntrophotalea carbinolica (strain DSM 2380 / NBRC 103641 / GraBd1) (Pelobacter carbinolicus), this protein is Peptide chain release factor 1.